The chain runs to 505 residues: Trans-cinnamate 4-monooxygenase (505 aa).

The chain crosses the membrane as a helical span at residues 3-23 (LLLLEKTLLGSFVAVLVAILV). (E)-cinnamate contacts are provided by residues 213–218 (RSRLAQ) and Ala-306. A heme-binding site is contributed by Cys-447.

It belongs to the cytochrome P450 family. The cofactor is heme.

The protein localises to the membrane. It carries out the reaction (E)-cinnamate + reduced [NADPH--hemoprotein reductase] + O2 = (E)-4-coumarate + oxidized [NADPH--hemoprotein reductase] + H2O + H(+). The protein operates within phenylpropanoid metabolism; trans-4-coumarate biosynthesis; trans-4-coumarate from trans-cinnamate: step 1/1. In terms of biological role, catalyzes the first oxidative step of the phenylpropanoid pathway in higher plants by transforming trans-cinnamate into p-coumarate. The compounds formed by this pathway are essential components for lignification, pollination, and defense against ultraviolet light, predators and pathogens. This Populus kitakamiensis (Aspen) protein is Trans-cinnamate 4-monooxygenase (CYP73A16).